Consider the following 244-residue polypeptide: 2-C-methyl-D-erythritol 4-phosphate cytidylyltransferase (244 aa).

Belongs to the IspD/TarI cytidylyltransferase family. IspD subfamily.

It carries out the reaction 2-C-methyl-D-erythritol 4-phosphate + CTP + H(+) = 4-CDP-2-C-methyl-D-erythritol + diphosphate. The protein operates within isoprenoid biosynthesis; isopentenyl diphosphate biosynthesis via DXP pathway; isopentenyl diphosphate from 1-deoxy-D-xylulose 5-phosphate: step 2/6. Catalyzes the formation of 4-diphosphocytidyl-2-C-methyl-D-erythritol from CTP and 2-C-methyl-D-erythritol 4-phosphate (MEP). The sequence is that of 2-C-methyl-D-erythritol 4-phosphate cytidylyltransferase from Corynebacterium diphtheriae (strain ATCC 700971 / NCTC 13129 / Biotype gravis).